Here is a 563-residue protein sequence, read N- to C-terminus: Ribulokinase (563 aa).

This sequence belongs to the ribulokinase family.

It carries out the reaction D-ribulose + ATP = D-ribulose 5-phosphate + ADP + H(+). The catalysed reaction is L-ribulose + ATP = L-ribulose 5-phosphate + ADP + H(+). It participates in carbohydrate degradation; L-arabinose degradation via L-ribulose; D-xylulose 5-phosphate from L-arabinose (bacterial route): step 2/3. The polypeptide is Ribulokinase (Mycolicibacterium smegmatis (Mycobacterium smegmatis)).